The chain runs to 334 residues: Photosystem II assembly protein Ycf48 (334 aa).

The signal sequence occupies residues 1–22; it reads MAKMLKLWRLVLLAAFSLLLMA.

This sequence belongs to the Ycf48 family. Part of early PSII assembly complexes which includes D1 (psbA) and PsbI; not found in mature PSII. Binds to the lumenal side of PSII complexes. Interacts with YidC.

It is found in the cellular thylakoid lumen. A factor required for optimal assembly of photosystem II (PSII), acting in the early stages of PSII assembly. Also plays a role in replacement of photodamaged D1 (psbA). Assists YidC in synthesis of chlorophyll-binding proteins. This is Photosystem II assembly protein Ycf48 from Synechococcus sp. (strain JA-3-3Ab) (Cyanobacteria bacterium Yellowstone A-Prime).